Consider the following 72-residue polypeptide: Translation initiation factor IF-1 (72 aa).

The S1-like domain occupies 1–72; the sequence is MSKEDSFEME…SKGRITYRAR (72 aa).

It belongs to the IF-1 family. In terms of assembly, component of the 30S ribosomal translation pre-initiation complex which assembles on the 30S ribosome in the order IF-2 and IF-3, IF-1 and N-formylmethionyl-tRNA(fMet); mRNA recruitment can occur at any time during PIC assembly.

It localises to the cytoplasm. Functionally, one of the essential components for the initiation of protein synthesis. Stabilizes the binding of IF-2 and IF-3 on the 30S subunit to which N-formylmethionyl-tRNA(fMet) subsequently binds. Helps modulate mRNA selection, yielding the 30S pre-initiation complex (PIC). Upon addition of the 50S ribosomal subunit IF-1, IF-2 and IF-3 are released leaving the mature 70S translation initiation complex. In Pseudomonas syringae pv. tomato (strain ATCC BAA-871 / DC3000), this protein is Translation initiation factor IF-1.